The chain runs to 409 residues: Diels-Alderase ucsH (409 aa).

A helical membrane pass occupies residues 386–406 (IYFFICMLLAVVTFGYINILE).

Belongs to the Diels-Alderase family.

The protein localises to the membrane. It participates in mycotoxin biosynthesis. Functionally, diels-Alderase; part of the gene cluster that mediates the biosynthesis of UCS1025A, a member of the pyrrolizidinone family that acts as a strong telomerase inhibitor and displays potent antibacterial and antitumor properties. These compounds share a hemiaminal-containing pyrrolizidinone core fused with a gamma-lactone, giving a furopyrrolizidine that is connected to a decalin fragment. The polyketide synthase module (PKS) of the PKS-NRPS ucsA is responsible for the synthesis of the polyketide backbone via the condensation of an acetyl-CoA starter unit with 6 malonyl-CoA units. The downstream nonribosomal peptide synthetase (NRPS) module then amidates the carboxyl end of the polyketide with a 2S,3S-methylproline derived from L-isoleucine by the 2-oxoglutarate-dependent dioxygenase ucsF which converts L-isoleucine to (4S,5S)-4-methylpyrroline-5-carboxylate that is further converted to 2S,3S-methylproline by the pyrroline-5-carboxylate reductase ucsG. Reductive release of the completed aminoacyl polyketide from the assembly line can form the 3-pyrrolin-2-one structure via an intramolecular Knoevenagel reaction. Because ucsA lacks a designated enoylreductase (ER) domain, the required activity is provided the enoyl reductase ucsL. This keto acyclic precursor is the substrate of the Diels-Alderase ucsH, that catalyzes the Diels-Alder cycloaddition. Oxidation of the 3S-methyl group to a carboxylate by the cytochrome P450 monooxygenase ucsK allows an oxa-Michael cyclization that might involve the reductase/dehydrogenase ucsI and which furnishes the furopyrrolizidine. The oxidase ucsJ likely plays a critical role in stereoselective reduction of the C5-C6 double bond to afford the required R-configured carboxylate group. Further enolization and oxidation at C5 by an unidentified enzyme affords the last intermediate that can undergo oxa-Michael cyclization to yield UCS1025A. The polypeptide is Diels-Alderase ucsH (Acremonium sp).